The following is a 204-amino-acid chain: Probable chorismate pyruvate-lyase (204 aa).

The substrate site is built by Arg78, Leu131, and Glu190.

The protein belongs to the UbiC family.

It localises to the cytoplasm. It carries out the reaction chorismate = 4-hydroxybenzoate + pyruvate. It functions in the pathway cofactor biosynthesis; ubiquinone biosynthesis. Removes the pyruvyl group from chorismate, with concomitant aromatization of the ring, to provide 4-hydroxybenzoate (4HB) for the ubiquinone pathway. This is Probable chorismate pyruvate-lyase from Shewanella frigidimarina (strain NCIMB 400).